The primary structure comprises 41 residues: Large ribosomal subunit protein bL36B (41 aa).

This sequence belongs to the bacterial ribosomal protein bL36 family.

The polypeptide is Large ribosomal subunit protein bL36B (Vibrio campbellii (strain ATCC BAA-1116)).